A 274-amino-acid chain; its full sequence is Large ribosomal subunit protein uL2c (274 aa).

The interval 230–252 (HPHGGGEGRSPIGRSKPLTPWGK) is disordered.

This sequence belongs to the universal ribosomal protein uL2 family. Part of the 50S ribosomal subunit.

It is found in the plastid. This chain is Large ribosomal subunit protein uL2c (rpl2), found in Euglena longa (Euglenophycean alga).